The following is a 197-amino-acid chain: SIGLEC family-like protein 1 (197 aa).

A helical transmembrane segment spans residues 118–138 (GAIYAGIVIALLFLCLLPLIV). A disordered region spans residues 160 to 179 (VRASQELEMSLKPEEPGKPV). Over residues 162–176 (ASQELEMSLKPEEPG) the composition is skewed to basic and acidic residues.

The protein resides in the membrane. This chain is SIGLEC family-like protein 1 (SIGLECL1), found in Homo sapiens (Human).